Consider the following 601-residue polypeptide: Elongation factor 4 (601 aa).

In terms of domain architecture, tr-type G spans 6 to 188 (NYIRNFSIVA…AIVRQLPPPH (183 aa)). GTP is bound by residues 18–23 (DHGKST) and 135–138 (NKVD).

It belongs to the TRAFAC class translation factor GTPase superfamily. Classic translation factor GTPase family. LepA subfamily.

The protein resides in the cell inner membrane. The enzyme catalyses GTP + H2O = GDP + phosphate + H(+). Required for accurate and efficient protein synthesis under certain stress conditions. May act as a fidelity factor of the translation reaction, by catalyzing a one-codon backward translocation of tRNAs on improperly translocated ribosomes. Back-translocation proceeds from a post-translocation (POST) complex to a pre-translocation (PRE) complex, thus giving elongation factor G a second chance to translocate the tRNAs correctly. Binds to ribosomes in a GTP-dependent manner. This chain is Elongation factor 4, found in Bartonella quintana (strain Toulouse) (Rochalimaea quintana).